The chain runs to 314 residues: Polyamine aminopropyltransferase (314 aa).

One can recognise a PABS domain in the interval 13-249; it reads WSWFLEWLTP…SMWGFVVASD (237 aa). Gln-42 is a binding site for S-methyl-5'-thioadenosine. The spermidine site is built by His-73 and Glu-97. S-methyl-5'-thioadenosine contacts are provided by residues Asp-117 and 149 to 150; that span reads DA. Asp-168 (proton acceptor) is an active-site residue. Residue Pro-177 coordinates S-methyl-5'-thioadenosine.

This sequence belongs to the spermidine/spermine synthase family. In terms of assembly, homodimer or homotetramer.

The protein resides in the cytoplasm. The catalysed reaction is S-adenosyl 3-(methylsulfanyl)propylamine + putrescine = S-methyl-5'-thioadenosine + spermidine + H(+). It functions in the pathway amine and polyamine biosynthesis; spermidine biosynthesis; spermidine from putrescine: step 1/1. Functionally, catalyzes the irreversible transfer of a propylamine group from the amino donor S-adenosylmethioninamine (decarboxy-AdoMet) to putrescine (1,4-diaminobutane) to yield spermidine. The chain is Polyamine aminopropyltransferase from Aeropyrum pernix (strain ATCC 700893 / DSM 11879 / JCM 9820 / NBRC 100138 / K1).